The following is a 201-amino-acid chain: Dephospho-CoA kinase (201 aa).

Residues Leu10 to Arg201 enclose the DPCK domain. An ATP-binding site is contributed by Ala18–Thr23.

Belongs to the CoaE family.

The protein resides in the cytoplasm. The catalysed reaction is 3'-dephospho-CoA + ATP = ADP + CoA + H(+). Its pathway is cofactor biosynthesis; coenzyme A biosynthesis; CoA from (R)-pantothenate: step 5/5. Functionally, catalyzes the phosphorylation of the 3'-hydroxyl group of dephosphocoenzyme A to form coenzyme A. The polypeptide is Dephospho-CoA kinase (Synechocystis sp. (strain ATCC 27184 / PCC 6803 / Kazusa)).